Consider the following 81-residue polypeptide: UPF0248 protein TK0315 (81 aa).

The protein belongs to the UPF0248 family.

The protein is UPF0248 protein TK0315 of Thermococcus kodakarensis (strain ATCC BAA-918 / JCM 12380 / KOD1) (Pyrococcus kodakaraensis (strain KOD1)).